The primary structure comprises 31 residues: Sarcolipin (31 aa).

Topologically, residues 1–7 are cytoplasmic; sequence MERSTQE. Residues 8-26 traverse the membrane as a helical segment; that stretch reads LFINFTVVLITVLLMWLLV. The Lumenal segment spans residues 27-31; that stretch reads RSYQY.

This sequence belongs to the sarcolipin family. Homooligomer. Can also form heterooligomers with other sarcoplasmic/endoplasmic reticulum calcium ATPase (SERCA) regulators ARLN, ERLN, PLN and STRIT1/DWORF. Monomer. Interacts with calcium ATPase ATP2A1/SERCA1. Interacts as a monomer with ATP2A2/SERCA2; the interaction decreases ATP2A2 Ca(2+) affinity. Interacts with VMP1; VMP1 competes with PLN and SLN to prevent them from forming an inhibitory complex with ATP2A2.

The protein resides in the sarcoplasmic reticulum membrane. It localises to the endoplasmic reticulum membrane. Its function is as follows. Reversibly inhibits the activity of ATP2A1/SERCA1 and ATP2A2/SERCA2 in sarcoplasmic reticulum by decreasing the apparent affinity of the ATPase for Ca(2+). Also inhibits the activity of ATP2A3/SERCA3. Modulates calcium re-uptake during muscle relaxation and plays an important role in calcium homeostasis in muscle. Required for muscle-based, non-shivering thermogenesis. This chain is Sarcolipin (Sln), found in Rattus norvegicus (Rat).